Consider the following 319-residue polypeptide: Curved DNA-binding protein (319 aa).

The J domain maps to 5 to 69 (DYYKILGVEP…QKRAEFDEIR (65 aa)).

Its subcellular location is the cytoplasm. It is found in the nucleoid. In terms of biological role, DNA-binding protein that preferentially recognizes a curved DNA sequence. It is probably a functional analog of DnaJ; displays overlapping activities with DnaJ, but functions under different conditions, probably acting as a molecular chaperone in an adaptive response to environmental stresses other than heat shock. Lacks autonomous chaperone activity; binds native substrates and targets them for recognition by DnaK. Its activity is inhibited by the binding of CbpM. This is Curved DNA-binding protein from Pseudomonas putida (strain ATCC 700007 / DSM 6899 / JCM 31910 / BCRC 17059 / LMG 24140 / F1).